We begin with the raw amino-acid sequence, 216 residues long: MDFYYLPGSAPCRAVQMTAAAVGVELNLKLTDLMKGEHMKPEFLKLNPQHCVPTLVDNGFALWESRAIMCYLVEKYGKPCNNDSLYPTDPQKRAIVNQRLYFDMGTLYQRFGDYYYPQIFEGAPANETNFAKIGEALAFLDTFLEGERFVAGGNGYSLADISLYATLTTFEVAGYDFSAYVNVLRWYKSMPELIPASDTNRSWAEAARPFFDKVKH.

A GST N-terminal domain is found at 1 to 80 (MDFYYLPGSA…YLVEKYGKPC (80 aa)). Residues serine 9, 50-52 (HCV), and 64-66 (ESR) each bind glutathione. Residues 89 to 210 (DPQKRAIVNQ…RSWAEAARPF (122 aa)) enclose the GST C-terminal domain.

Belongs to the GST superfamily. Theta family. As to quaternary structure, homodimer.

It catalyses the reaction RX + glutathione = an S-substituted glutathione + a halide anion + H(+). Functionally, conjugation of reduced glutathione to a wide number of exogenous and endogenous hydrophobic electrophiles. This Anopheles gambiae (African malaria mosquito) protein is Glutathione S-transferase 1, isoform B.